The following is a 243-amino-acid chain: MTYSLRIADIPVSERPRERLISVGAKNLSNAELLAILLATGQGKGKLSAVGLGQHILNELSKYRRDPLDVLRDIHPQELTAIHGIGPAKATTILAAIELGKRAFQRRPTEKMVIDSPDTAAAILGHELMYQSQERFAVILLDVKNQLIALKVITIGTATETLVHPREIFREVVKQSATKLIIAHNHPTGSLVPSQDDILLTEQLLQGATYLAIPLLDHLILGNGNFQSLRQITDLWEKYPQED.

Positions 113 to 235 constitute an MPN domain; the sequence is VIDSPDTAAA…FQSLRQITDL (123 aa). Histidine 184, histidine 186, and aspartate 197 together coordinate Zn(2+). Residues 184 to 197 carry the JAMM motif motif; sequence HNHPTGSLVPSQDD.

The protein belongs to the UPF0758 family.

The polypeptide is UPF0758 protein MAE_44350 (Microcystis aeruginosa (strain NIES-843 / IAM M-2473)).